Consider the following 297-residue polypeptide: Ribosomal RNA small subunit methyltransferase A (297 aa).

S-adenosyl-L-methionine-binding residues include N31, L33, G58, E79, D104, and N129.

It belongs to the class I-like SAM-binding methyltransferase superfamily. rRNA adenine N(6)-methyltransferase family. RsmA subfamily.

The protein resides in the cytoplasm. The catalysed reaction is adenosine(1518)/adenosine(1519) in 16S rRNA + 4 S-adenosyl-L-methionine = N(6)-dimethyladenosine(1518)/N(6)-dimethyladenosine(1519) in 16S rRNA + 4 S-adenosyl-L-homocysteine + 4 H(+). In terms of biological role, specifically dimethylates two adjacent adenosines (A1518 and A1519) in the loop of a conserved hairpin near the 3'-end of 16S rRNA in the 30S particle. May play a critical role in biogenesis of 30S subunits. This Pediococcus pentosaceus (strain ATCC 25745 / CCUG 21536 / LMG 10740 / 183-1w) protein is Ribosomal RNA small subunit methyltransferase A.